Consider the following 182-residue polypeptide: MLDPRTRPRVVNVVSTSDLVQRVSAKKMAAMPCCMYDEAVYGGRCGYIKTPGMQGRVTVFISGKMISVGARSVRASFGQLHEARLHLVRNGAAGDCKIRPVVRNIVATVDAGRNVPIDRISSRMPGAVYDPGSFPGMILKGLDSCSFLVFASGKMVIAGAKSPDELRRSSFDLLTRLNNAGA.

Tandem repeats lie at residues 10–87 and 102–177.

The protein belongs to the TBP family.

Its function is as follows. General factor that plays a role in the activation of archaeal genes transcribed by RNA polymerase. Binds specifically to the TATA box promoter element which lies close to the position of transcription initiation. The protein is TATA-box-binding protein (tbp) of Cenarchaeum symbiosum (strain A).